We begin with the raw amino-acid sequence, 77 residues long: Large ribosomal subunit protein bL28 (77 aa).

The disordered stretch occupies residues 1 to 20; the sequence is MSRVCQVTGKGPVTGNNISH.

The protein belongs to the bacterial ribosomal protein bL28 family.

The polypeptide is Large ribosomal subunit protein bL28 (Pseudomonas fluorescens (strain Pf0-1)).